Consider the following 546-residue polypeptide: MFDNYSRESYIFNAGSLGHIKGLTITSHGSPAVHYFGGLPYALPPVGQWRFRVPRRLPKDYRYGTATEPGKFTDGTKICPQPPSSNTPDPSVVSEDCLQLNIWVPAGPPPIHGWPVCFYIHGGFLQVGTSNTKPEDLVSLLNESAFRAIMVLPSYRLNVFGFLASKALAAEASSNGEATGNYGLWDQRLALEWTHENIRLFGGDRSNITVAGYSAGAYSTFQQLAHELFRVPEEKAIIRRVAMFSNSTGVMPKSLQDQQLQCDELLRRLGINLDLSYDEKLASLRAVPHDRLVQAQIGMRISEFRVLADDAFYPLDLMDKINNGEFAKRMKIRGIRLMNGECESEHIMYCRWRTPQESYSAVYQRLLADFSPEVTQKIMEHYCGSSENLPVGYKNWEEFFGRVYANIQVHYLQRGFHNALFTGGLEAGRDVFRYRFERRLDCVAEKIPSEWGVTHLTDIPVWLWGCGYTNGLDDQEKKWLKGWNEGFAVFVNGDEVNWGTKNPKDMRRWRRDGKTDVCEDNSWEDGLKFWKLVNSGHRGTEGKAND.

The disordered stretch occupies residues 72–91 (FTDGTKICPQPPSSNTPDPS). The Acyl-ester intermediate role is filled by Ser-214.

This sequence belongs to the type-B carboxylesterase/lipase family.

The enzyme catalyses a carboxylic ester + H2O = an alcohol + a carboxylate + H(+). Functionally, carboxylic ester hydrolase; part of the Fusarium detoxification of benzoxazolinone cluster 2 (FDB2) involved in the degradation of benzoxazolinones produced by the host plant. Maize, wheat, and rye produce the 2 benzoxazinone phytoanticipins 2,4-dihy-droxy-7-methoxy-1,4-benzoxazin-3-one (DIMBOA) and 2,4-dihydroxy-1,4-benzoxazin-3-one (DIBOA) that, due to their inherent instability once released, spontaneously degrade to the more stable corresponding benzoxazolinones, 6-methoxy-2-benzoxazolinone (MBOA) and 2-benzoxazolinone (BOA), respectively. The first step in the detoxification of benzoxazolinones involves the hydrolysis of the cyclic ester bond of benzoxazolinones by the FDB1 cluster gamma-lactamase MBL1 to aminophenols. MBL1 is able to convert BOA into 2-aminophenol (2-AP), as well as MBOA into 5-methoxy-2-aminophenol (2-AMP). The FDB2 cluster N-malonyltransferase FDB2/NAT1 then metabolizes aminophenols via N-malonylation to non-toxic malonamic acids. FDB2/NAT1 converts 2-AP into N-(2-hydroxyphenyl) malonamic acid (HPMA) and 2-AMP into N-(2-hydroxy-4-methoxyphenyl) malonamic acid (HMPMA). The duplicated dienlactone hydrolases DLH1 and DLH2 may provide redundant function for hydrolyzing the lactone moiety in the BOA molecule. The roles of the amidases an other enzymes encoded by the 2 FDB clusters have not been identified so far. This Gibberella moniliformis (strain M3125 / FGSC 7600) (Maize ear and stalk rot fungus) protein is Carboxylic ester hydrolase FVEG_12634.